Reading from the N-terminus, the 261-residue chain is Pantothenate synthetase (261 aa).

29–36 (MGALHNGH) is an ATP binding site. The active-site Proton donor is the His36. Position 60 (Gln60) interacts with (R)-pantoate. Gln60 is a beta-alanine binding site. 147-150 (GEKD) lines the ATP pocket. (R)-pantoate is bound at residue Gln153. Residue 184–187 (LSSR) coordinates ATP.

This sequence belongs to the pantothenate synthetase family. In terms of assembly, homodimer.

It localises to the cytoplasm. The enzyme catalyses (R)-pantoate + beta-alanine + ATP = (R)-pantothenate + AMP + diphosphate + H(+). It functions in the pathway cofactor biosynthesis; (R)-pantothenate biosynthesis; (R)-pantothenate from (R)-pantoate and beta-alanine: step 1/1. Its function is as follows. Catalyzes the condensation of pantoate with beta-alanine in an ATP-dependent reaction via a pantoyl-adenylate intermediate. This is Pantothenate synthetase from Francisella tularensis subsp. mediasiatica (strain FSC147).